Here is a 419-residue protein sequence, read N- to C-terminus: RING finger protein 150 (419 aa).

An N-terminal signal peptide occupies residues 1-34; the sequence is MALSVIQACRSLALSTWLLSFCFVHLLCLDFTVA. At 35-197 the chain is on the extracellular side; the sequence is EKEEWYTAFV…NLQKYVSRTS (163 aa). A PA domain is found at 70–172; sequence SLKREARGVL…PKGRELVLLM (103 aa). The helical transmembrane segment at 198-218 threads the bilayer; the sequence is VVFVSISFIILMIISLAWLVF. Topologically, residues 219–419 are cytoplasmic; it reads YYIQRFRYAN…IDTPTDDPKC (201 aa). The RING-type; atypical zinc-finger motif lies at 267–308; it reads CAVCIEGYKPNDVVRILPCRHLFHKCCVDPWLVDHRTCPMCK. Residues 374–419 form a disordered region; the sequence is SEPLSQDTMPTEQSELQPIASGSSDVSLTTGAGHSDIDTPTDDPKC. Over residues 376–405 the composition is skewed to polar residues; that stretch reads PLSQDTMPTEQSELQPIASGSSDVSLTTGA.

It is found in the membrane. This Danio rerio (Zebrafish) protein is RING finger protein 150 (rnf150).